A 408-amino-acid polypeptide reads, in one-letter code: Solute carrier family 35 member F1 (408 aa).

The segment at 1–20 is disordered; sequence MIPPEPPQPQLQPPPPPAPP. Helical transmembrane passes span 60–80, 94–114, 129–147, 159–179, 186–206, 221–241, 247–267, 284–304, 311–331, and 335–355; these read MLIS…IGLT, VFQS…TLAV, WWKY…YLVV, QLLD…FLLI, FIGI…DVLV, LLVL…ESII, VEFL…QLAI, LLYV…PVVI, SVNL…LFLF, and FSGL…LYSS.

Belongs to the SLC35F solute transporter family.

Its subcellular location is the cytoplasmic vesicle. The protein localises to the secretory vesicle. It is found in the synaptic vesicle membrane. Functionally, putative solute transporter. This Mus musculus (Mouse) protein is Solute carrier family 35 member F1 (Slc35f1).